A 365-amino-acid chain; its full sequence is Peptide chain release factor 2 (365 aa).

Q252 is subject to N5-methylglutamine.

This sequence belongs to the prokaryotic/mitochondrial release factor family. Methylated by PrmC. Methylation increases the termination efficiency of RF2.

It is found in the cytoplasm. Its function is as follows. Peptide chain release factor 2 directs the termination of translation in response to the peptide chain termination codons UGA and UAA. This chain is Peptide chain release factor 2, found in Haemophilus ducreyi (strain 35000HP / ATCC 700724).